Here is a 383-residue protein sequence, read N- to C-terminus: Deoxyuridylate hydroxymethyltransferase (383 aa).

The active site involves Cys-162.

This sequence belongs to the thymidylate synthase family. As to quaternary structure, homodimer.

It catalyses the reaction dUMP + (6R)-5,10-methylene-5,6,7,8-tetrahydrofolate + H2O = 5-hydroxymethyl-dUMP + (6S)-5,6,7,8-tetrahydrofolate. Its function is as follows. Catalyzes formation of 5-hydroxymethyldeoxyuridylate (5HMdUMP) as a step in the pathway that replaces dTMP by thymidine hypermodifications in the viral genome. As a final result of the pathway of hypermodification, hydroxymethyluracil substitutes for a subset of thymidines in the viral DNA. These modifications probably prevent degradation of viral DNA by the host restriction-modification antiviral defense system. This Bacillus subtilis (Bacteriophage SP01) protein is Deoxyuridylate hydroxymethyltransferase.